The primary structure comprises 878 residues: MTKFTTEEVRSKFITYFKANNHTHVPTSSLIPHNDPSLMFVNSGMVQFKNVFTGQEKRPYNKAVTSQKSLRAGGKHNDLENVGYTARHHTFFEMLGNFSFGDYFKEQAIYYAWNLLTKEFELPKDKLYATIYHTDDEAASYWKKIAGFGDDRIIKIKTNDNFWSMGDTGPCGPCSEIFYDHGEQIYGGLPGTKDEDGDRFIEIWNMVFMQYEQIDKDTSIELSQKSIDTGMGLERMTAVLQHVNNNYNIDLFQEIINFTENIVKVKVEGEAKFSYRVIADHLRASSFLIADGVIPSNEGRGYVLRRIMRRSMRHAHMLGAKEPLMYKLLPKLVDLMGNVYPELKRAERFISSILEQEEIRFKATLERGLKLLTEETEMLTKGNELSGEVAFKLYDTYGFPLDLTEDILKTRDISVDHKGFEEQMLMQKERARKSWLGSGESKTDQLWFDIKEQHGSTEFLGYTLNEAKCKIIALIKNNNLVNDIKEIDTQFLLISNQTPFYGESGGQIGDIGTIFAKDSEVEVIDTLKYLGSIIVHKCILKKGQINVGENANFSIDIRYRQNLRIHHSATHILHAVLHEVLGKHVTQKGSLVAPTYLRFDISHSKAVTNEEITLIEDKVNEIIRDNHEVNTTFMATEDAVKQGAMALFGEKYDSEVRVVKMGETSLELCAGTHVRRTGDIGCFKITSESAIAAGVRRIEAVCGEFVIKLMREKDSLLKSIESSLKTNKNELITKVNNILERNKEVEKELEKTHLASLDLSIEQIEKQAAQITGIKLLYKKVGNIDNKILRQAAENLTKKVEDLIMVYIAEGIGKLSITVAVSKAITDKYNADIIAKKLSLFLGGSGGGGQASLAQAGGNDIGKLTNIHKKLYSLLTVS.

Zn(2+) contacts are provided by histidine 567, histidine 571, cysteine 669, and histidine 673.

The protein belongs to the class-II aminoacyl-tRNA synthetase family. It depends on Zn(2+) as a cofactor.

It localises to the cytoplasm. It carries out the reaction tRNA(Ala) + L-alanine + ATP = L-alanyl-tRNA(Ala) + AMP + diphosphate. Its function is as follows. Catalyzes the attachment of alanine to tRNA(Ala) in a two-step reaction: alanine is first activated by ATP to form Ala-AMP and then transferred to the acceptor end of tRNA(Ala). Also edits incorrectly charged Ser-tRNA(Ala) and Gly-tRNA(Ala) via its editing domain. In Rickettsia massiliae (strain Mtu5), this protein is Alanine--tRNA ligase.